Reading from the N-terminus, the 680-residue chain is Galactose oxidase (680 aa).

The signal sequence occupies residues 1–24; the sequence is MKHLLTLALCFSSINAVAVTVPHK. Residues 25–41 constitute a propeptide that is removed on maturation; that stretch reads AVGTGIPEGSLQFLSLR. Residues 42 to 189 form the F5/8 type C domain; the sequence is ASAPIGSAIS…SIAEINVFQA (148 aa). The cysteines at positions 59 and 68 are disulfide-linked. Kelch repeat units follow at residues 223-268, 279-321, 323-372, 436-490, and 492-544; these read RVLM…HDMF, QIVV…TMSD, RVFT…LYRS, KILT…VLPD, and STFI…LLLP. Positions 269–313 form a cross-link, 3'-(S-cysteinyl)-tyrosine (Cys-Tyr); that stretch reads CPGISMDGNGQIVVTGGNDAKKTSLYDSSSDSWIPGPDMQVARGY. Tyr313 contributes to the Cu cation binding site. Cu cation contacts are provided by Tyr536 and His537. Residue Tyr536 is the Proton acceptor of the active site. Cys556 and Cys559 are oxidised to a cystine. Residue His622 participates in Cu cation binding.

As to quaternary structure, monomer. Cu(2+) serves as cofactor. Galactose oxidase contains a protein-derived free radical cofactor. In the active state, Tyr-313, which is cross-linked to Cys-269 via a thioether bond, is oxidized to a radical and acts with Cu(2+) as a two-electron acceptor in the oxidation reaction. The cross-link is believed to modulate the redox potential of the tyrosyl radical, which is further stabilized by a stacking interaction with Trp-331 in the active site. The post-translational formation of the cross-link is closely linked to the propeptide cleavage event, and both are copper-dependent, autocatalytic processes. The propeptide may act as an intramolecular chaperone, facilitating thioester bond formation and copper binding by positioning of active-site residues, including copper ligands.

It localises to the secreted. The enzyme catalyses D-galactose + O2 = D-galacto-hexodialdose + H2O2. Its activity is regulated as follows. Inhibited by diethyldithiocarbamate. In terms of biological role, catalyzes the sterospecific oxidation of primary alcohols to the corresponding aldehydes. The biologically relevant substrate of the enzyme is not known as the enzyme exhibits broad substrate specificity from small alcohols through sugars to oligo- and polysaccharides. This chain is Galactose oxidase (GAOA), found in Gibberella zeae (Wheat head blight fungus).